A 548-amino-acid chain; its full sequence is Glucose-6-phosphate isomerase (548 aa).

The Proton donor role is filled by E355. Residues H386 and K511 contribute to the active site.

This sequence belongs to the GPI family.

The protein resides in the cytoplasm. The enzyme catalyses alpha-D-glucose 6-phosphate = beta-D-fructose 6-phosphate. The protein operates within carbohydrate biosynthesis; gluconeogenesis. Its pathway is carbohydrate degradation; glycolysis; D-glyceraldehyde 3-phosphate and glycerone phosphate from D-glucose: step 2/4. Functionally, catalyzes the reversible isomerization of glucose-6-phosphate to fructose-6-phosphate. The chain is Glucose-6-phosphate isomerase from Wigglesworthia glossinidia brevipalpis.